Consider the following 199-residue polypeptide: TATA-box-binding protein (199 aa).

2 repeat units span residues 10 to 86 (IENI…VKLL) and 101 to 177 (IQNI…YNQL).

This sequence belongs to the TBP family.

In terms of biological role, general factor that plays a role in the activation of archaeal genes transcribed by RNA polymerase. Binds specifically to the TATA box promoter element which lies close to the position of transcription initiation. In Pyrobaculum aerophilum (strain ATCC 51768 / DSM 7523 / JCM 9630 / CIP 104966 / NBRC 100827 / IM2), this protein is TATA-box-binding protein.